Consider the following 246-residue polypeptide: 1-(5-phosphoribosyl)-5-[(5-phosphoribosylamino)methylideneamino] imidazole-4-carboxamide isomerase (246 aa).

The active-site Proton acceptor is the aspartate 7. Catalysis depends on aspartate 130, which acts as the Proton donor.

This sequence belongs to the HisA/HisF family.

The protein localises to the cytoplasm. The catalysed reaction is 1-(5-phospho-beta-D-ribosyl)-5-[(5-phospho-beta-D-ribosylamino)methylideneamino]imidazole-4-carboxamide = 5-[(5-phospho-1-deoxy-D-ribulos-1-ylimino)methylamino]-1-(5-phospho-beta-D-ribosyl)imidazole-4-carboxamide. Its pathway is amino-acid biosynthesis; L-histidine biosynthesis; L-histidine from 5-phospho-alpha-D-ribose 1-diphosphate: step 4/9. The protein is 1-(5-phosphoribosyl)-5-[(5-phosphoribosylamino)methylideneamino] imidazole-4-carboxamide isomerase of Sodalis glossinidius (strain morsitans).